A 274-amino-acid polypeptide reads, in one-letter code: Putative pyruvate, phosphate dikinase regulatory protein (274 aa).

151-158 (GVSRTSKT) contacts ADP.

Belongs to the pyruvate, phosphate/water dikinase regulatory protein family. PDRP subfamily.

The enzyme catalyses N(tele)-phospho-L-histidyl/L-threonyl-[pyruvate, phosphate dikinase] + ADP = N(tele)-phospho-L-histidyl/O-phospho-L-threonyl-[pyruvate, phosphate dikinase] + AMP + H(+). It catalyses the reaction N(tele)-phospho-L-histidyl/O-phospho-L-threonyl-[pyruvate, phosphate dikinase] + phosphate + H(+) = N(tele)-phospho-L-histidyl/L-threonyl-[pyruvate, phosphate dikinase] + diphosphate. Its function is as follows. Bifunctional serine/threonine kinase and phosphorylase involved in the regulation of the pyruvate, phosphate dikinase (PPDK) by catalyzing its phosphorylation/dephosphorylation. The protein is Putative pyruvate, phosphate dikinase regulatory protein of Pelagibacter ubique (strain HTCC1062).